The sequence spans 205 residues: Guanylate kinase (205 aa).

The Guanylate kinase-like domain maps to 3 to 183 (GFVLLISGPS…SYEALRAILI (181 aa)). 10-17 (GPSGAGKS) serves as a coordination point for ATP.

The protein belongs to the guanylate kinase family.

It is found in the cytoplasm. It carries out the reaction GMP + ATP = GDP + ADP. Functionally, essential for recycling GMP and indirectly, cGMP. The polypeptide is Guanylate kinase (Campylobacter jejuni (strain RM1221)).